Here is a 144-residue protein sequence, read N- to C-terminus: MASLATLAAVQPTTLKGLAGSSIAGTKLHIKPARQSFKLNNVRSGAIVAKYGDKSVYFDLEDIANTTGQWDVYGSDAPSPYNSLQSKFFETFAAPFTKRGLLLKFLILGGGSLLTYVSANAPQDVLPITRGPQQPPKLGPRGKI.

Residues 1 to 49 constitute a chloroplast transit peptide; that stretch reads MASLATLAAVQPTTLKGLAGSSIAGTKLHIKPARQSFKLNNVRSGAIVA. The chain crosses the membrane as a helical span at residues 104–122; it reads KFLILGGGSLLTYVSANAP.

This sequence belongs to the psaH family.

It localises to the plastid. The protein resides in the chloroplast thylakoid membrane. In terms of biological role, possible role could be the docking of the LHC I antenna complex to the core complex. In Spinacia oleracea (Spinach), this protein is Photosystem I reaction center subunit VI, chloroplastic (PSAH).